Reading from the N-terminus, the 80-residue chain is MNQHVKVTFDFTNYNYGTYDLAVPAYLPIKNLIALVLDSLDISIFDVNTQIKVMTKGQLLVENDRLIDYQIADGDILKLL.

This sequence belongs to the EsaB family.

The protein localises to the cytoplasm. Its function is as follows. Seems to regulate secreted factors that contribute to the establishment of persistent infections in the host. In Staphylococcus aureus (strain COL), this protein is Type VII secretion system accessory factor EsaB.